We begin with the raw amino-acid sequence, 349 residues long: Small ribosomal subunit biogenesis GTPase RsgA (349 aa).

Positions 1–38 (MSKNKLSKGQERRVQANHQRRLKRTDNKPELDDSQLGE) are disordered. Positions 102–272 (TSVLNRPDIY…VIDSPGVREF (171 aa)) constitute a CP-type G domain. GTP-binding positions include 158–161 (NKID) and 212–220 (GQSGVGKSS). The Zn(2+) site is built by Cys296, Cys301, His303, and Cys309.

This sequence belongs to the TRAFAC class YlqF/YawG GTPase family. RsgA subfamily. In terms of assembly, monomer. Associates with 30S ribosomal subunit, binds 16S rRNA. Zn(2+) serves as cofactor.

The protein localises to the cytoplasm. Its function is as follows. One of several proteins that assist in the late maturation steps of the functional core of the 30S ribosomal subunit. Helps release RbfA from mature subunits. May play a role in the assembly of ribosomal proteins into the subunit. Circularly permuted GTPase that catalyzes slow GTP hydrolysis, GTPase activity is stimulated by the 30S ribosomal subunit. The sequence is that of Small ribosomal subunit biogenesis GTPase RsgA from Serratia proteamaculans (strain 568).